We begin with the raw amino-acid sequence, 442 residues long: Transcription factor AP-2-epsilon (442 aa).

A PPxY motif motif is present at residues 54–59 (YFPPPY). Ser-246 bears the Phosphoserine; by PKA mark. Residues 287 to 417 (RRKAANVTLL…YLLESLKGLD (131 aa)) form an H-S-H (helix-span-helix), dimerization region.

It belongs to the AP-2 family. In terms of assembly, binds DNA as a dimer. Can form homodimers or heterodimers with other AP-2 family members. Expressed in skin, primary keratinocytes, immortalized keratinocytes, and HeLa cell line.

It localises to the nucleus. Its function is as follows. Sequence-specific DNA-binding protein that interacts with inducible viral and cellular enhancer elements to regulate transcription of selected genes. AP-2 factors bind to the consensus sequence 5'-GCCNNNGGC-3' and activate genes involved in a large spectrum of important biological functions including proper eye, face, body wall, limb and neural tube development. They also suppress a number of genes including MCAM/MUC18, C/EBP alpha and MYC. AP-2-epsilon may play a role in the development of the CNS and in cartilage differentiation. The protein is Transcription factor AP-2-epsilon of Homo sapiens (Human).